Reading from the N-terminus, the 208-residue chain is Small ribosomal subunit protein eS8 (208 aa).

Residues 1-27 (MGISRDNWHKRRKTGGKRKPYHKKRKY) are disordered. Residue Gly-2 is the site of N-myristoyl glycine attachment. Over residues 8–26 (WHKRRKTGGKRKPYHKKRK) the composition is skewed to basic residues. Lys-37 and Lys-128 each carry N6-acetyllysine. At Thr-130 the chain carries Phosphothreonine. Phosphoserine is present on Ser-160. Residues Lys-170 and Lys-193 each participate in a glycyl lysine isopeptide (Lys-Gly) (interchain with G-Cter in SUMO2) cross-link.

It belongs to the eukaryotic ribosomal protein eS8 family. As to quaternary structure, component of the small ribosomal subunit. Identified in a IGF2BP1-dependent mRNP granule complex containing untranslated mRNAs. Part of the small subunit (SSU) processome, composed of more than 70 proteins and the RNA chaperone small nucleolar RNA (snoRNA) U3.

It localises to the cytoplasm. It is found in the membrane. The protein localises to the nucleus. The protein resides in the nucleolus. Component of the small ribosomal subunit. The ribosome is a large ribonucleoprotein complex responsible for the synthesis of proteins in the cell. Part of the small subunit (SSU) processome, first precursor of the small eukaryotic ribosomal subunit. During the assembly of the SSU processome in the nucleolus, many ribosome biogenesis factors, an RNA chaperone and ribosomal proteins associate with the nascent pre-rRNA and work in concert to generate RNA folding, modifications, rearrangements and cleavage as well as targeted degradation of pre-ribosomal RNA by the RNA exosome. The sequence is that of Small ribosomal subunit protein eS8 (RPS8) from Oryctolagus cuniculus (Rabbit).